The following is a 145-amino-acid chain: MLNEFKAFIARGNVMDLAVGVIIGGAFGGIVKSLVDDLIMPIVGAIFGGFDFSNYFLPLSAAVNAQSLAAAREQGAVFAYGSFLTVLINFLILAWIIFLMVKGVNTMRAQIERQEKAAPEELPPPPADVQLLTEIRDLLARRPTA.

Helical transmembrane passes span 14–34 (VMDLAVGVIIGGAFGGIVKSL), 38–58 (LIMPIVGAIFGGFDFSNYFLP), and 81–101 (GSFLTVLINFLILAWIIFLMV).

The protein belongs to the MscL family. As to quaternary structure, homopentamer.

It localises to the cell inner membrane. In terms of biological role, channel that opens in response to stretch forces in the membrane lipid bilayer. May participate in the regulation of osmotic pressure changes within the cell. In Rhizobium johnstonii (strain DSM 114642 / LMG 32736 / 3841) (Rhizobium leguminosarum bv. viciae), this protein is Large-conductance mechanosensitive channel.